A 127-amino-acid chain; its full sequence is Small ribosomal subunit protein uS12 (127 aa).

Basic residues predominate over residues 11 to 20; the sequence is GRKPKKKKSK. The segment at 11–30 is disordered; sequence GRKPKKKKSKAPALQGNPQK. Asp89 bears the 3-methylthioaspartic acid mark. A disordered region spans residues 105 to 127; the sequence is AGVEGRRQSRSKYGAKRPKDQKK. The span at 112-127 shows a compositional bias: basic residues; the sequence is QSRSKYGAKRPKDQKK.

It belongs to the universal ribosomal protein uS12 family. In terms of assembly, part of the 30S ribosomal subunit. Contacts proteins S8 and S17. May interact with IF1 in the 30S initiation complex.

Functionally, with S4 and S5 plays an important role in translational accuracy. Its function is as follows. Interacts with and stabilizes bases of the 16S rRNA that are involved in tRNA selection in the A site and with the mRNA backbone. Located at the interface of the 30S and 50S subunits, it traverses the body of the 30S subunit contacting proteins on the other side and probably holding the rRNA structure together. The combined cluster of proteins S8, S12 and S17 appears to hold together the shoulder and platform of the 30S subunit. The polypeptide is Small ribosomal subunit protein uS12 (Thermotoga maritima (strain ATCC 43589 / DSM 3109 / JCM 10099 / NBRC 100826 / MSB8)).